A 118-amino-acid chain; its full sequence is Small ribosomal subunit protein uS13 (118 aa).

The segment at 93-118 (RGLPVRGQRTKTNARTRKGPRKPIRK) is disordered.

The protein belongs to the universal ribosomal protein uS13 family. In terms of assembly, part of the 30S ribosomal subunit. Forms a loose heterodimer with protein S19. Forms two bridges to the 50S subunit in the 70S ribosome.

Its function is as follows. Located at the top of the head of the 30S subunit, it contacts several helices of the 16S rRNA. In the 70S ribosome it contacts the 23S rRNA (bridge B1a) and protein L5 of the 50S subunit (bridge B1b), connecting the 2 subunits; these bridges are implicated in subunit movement. Contacts the tRNAs in the A and P-sites. This Pseudomonas paraeruginosa (strain DSM 24068 / PA7) (Pseudomonas aeruginosa (strain PA7)) protein is Small ribosomal subunit protein uS13.